We begin with the raw amino-acid sequence, 355 residues long: Sulfate/thiosulfate import ATP-binding protein CysA (355 aa).

The region spanning 3-233 is the ABC transporter domain; sequence IIINNVSKQF…PASPFVMGFI (231 aa). 35 to 42 contributes to the ATP binding site; it reads GPSGSGKS.

This sequence belongs to the ABC transporter superfamily. Sulfate/tungstate importer (TC 3.A.1.6) family. The complex is composed of two ATP-binding proteins (CysA), two transmembrane proteins (CysT and CysW) and a solute-binding protein (CysP).

Its subcellular location is the cell inner membrane. It carries out the reaction sulfate(out) + ATP + H2O = sulfate(in) + ADP + phosphate + H(+). It catalyses the reaction thiosulfate(out) + ATP + H2O = thiosulfate(in) + ADP + phosphate + H(+). Its function is as follows. Part of the ABC transporter complex CysAWTP involved in sulfate/thiosulfate import. Responsible for energy coupling to the transport system. The chain is Sulfate/thiosulfate import ATP-binding protein CysA from Synechocystis sp. (strain ATCC 27184 / PCC 6803 / Kazusa).